The following is a 475-amino-acid chain: Ribulose bisphosphate carboxylase large chain (475 aa).

The propeptide occupies 1 to 2; the sequence is MS. Position 3 is an N-acetylproline (proline 3). Position 14 is an N6,N6,N6-trimethyllysine (lysine 14). 2 residues coordinate substrate: asparagine 123 and threonine 173. The active-site Proton acceptor is lysine 175. Residue lysine 177 participates in substrate binding. Positions 201, 203, and 204 each coordinate Mg(2+). Position 201 is an N6-carboxylysine (lysine 201). Histidine 294 acts as the Proton acceptor in catalysis. Substrate-binding residues include arginine 295, histidine 327, and serine 379.

The protein belongs to the RuBisCO large chain family. Type I subfamily. Heterohexadecamer of 8 large chains and 8 small chains; disulfide-linked. The disulfide link is formed within the large subunit homodimers. Mg(2+) serves as cofactor. In terms of processing, the disulfide bond which can form in the large chain dimeric partners within the hexadecamer appears to be associated with oxidative stress and protein turnover.

It localises to the plastid. Its subcellular location is the chloroplast. It carries out the reaction 2 (2R)-3-phosphoglycerate + 2 H(+) = D-ribulose 1,5-bisphosphate + CO2 + H2O. It catalyses the reaction D-ribulose 1,5-bisphosphate + O2 = 2-phosphoglycolate + (2R)-3-phosphoglycerate + 2 H(+). In terms of biological role, ruBisCO catalyzes two reactions: the carboxylation of D-ribulose 1,5-bisphosphate, the primary event in carbon dioxide fixation, as well as the oxidative fragmentation of the pentose substrate in the photorespiration process. Both reactions occur simultaneously and in competition at the same active site. The polypeptide is Ribulose bisphosphate carboxylase large chain (Ostrya virginiana (American hophornbeam)).